Consider the following 329-residue polypeptide: (12E)-labda-8(17),12,14-triene synthase (329 aa).

Mg(2+) is bound by residues Asp-90 and Glu-95. Residues 90–95 (DDMHGE) carry the DDXXXE motif motif. A substrate-binding site is contributed by Arg-184. Mg(2+) contacts are provided by Asn-230 and Ser-234. An NXXXSXXXE motif motif is present at residues 230-238 (NDLASYERE). Arg-237 contributes to the substrate binding site. Position 238 (Glu-238) interacts with Mg(2+). A substrate-binding site is contributed by 316–317 (RY).

Belongs to the terpene synthase family. Mg(2+) serves as cofactor.

The enzyme catalyses (+)-copalyl diphosphate = (12E)-labda-8(17),12,14-triene + diphosphate. Involved in the biosynthesis of the mercapturic acid derivative diterpene cyslabdan A, a potentiator of the beta-lactam antibiotic imipenem. Catalyzes the conversion of (+)-copalyl diphosphate to yield labda-8(17),12(E),14-triene (biformene). In Streptomyces cyslabdanicus, this protein is (12E)-labda-8(17),12,14-triene synthase.